The sequence spans 217 residues: HTH-type transcriptional regulator EthR (217 aa).

The disordered stretch occupies residues 1-22 (MTTASQTRTPRGRRSARPSGDD). Residues 21-81 (DDREAAILAT…SLIDPLIKRA (61 aa)) enclose the HTH tetR-type domain. A DNA-binding region (H-T-H motif) is located at residues 44–63 (SVDDLAKGAGISRPTFYFYF).

In terms of assembly, homodimer.

Functionally, involved in the repression of teh monooxygenase EthA which is responsible of the formation of the active metabolite of ethionamide (ETH). In Mycolicibacterium smegmatis (strain ATCC 700084 / mc(2)155) (Mycobacterium smegmatis), this protein is HTH-type transcriptional regulator EthR (ethR).